Consider the following 142-residue polypeptide: Small ribosomal subunit protein uS12 (142 aa).

This sequence belongs to the universal ribosomal protein uS12 family. In terms of assembly, part of the 30S ribosomal subunit.

In terms of biological role, with S4 and S5 plays an important role in translational accuracy. Located at the interface of the 30S and 50S subunits. This chain is Small ribosomal subunit protein uS12, found in Methanospirillum hungatei JF-1 (strain ATCC 27890 / DSM 864 / NBRC 100397 / JF-1).